We begin with the raw amino-acid sequence, 524 residues long: PiggyBac transposable element-derived protein 5 (524 aa).

The disordered stretch occupies residues 30-117 (DDVFGESGPD…DTGGPTRKMP (88 aa)). Low complexity predominate over residues 47–59 (STSAASRSSSAAS). Positions 67-79 (PGPPGAAPPPPRA) are enriched in pro residues. The segment covering 98-108 (LRDRPPPRFED) has biased composition (basic and acidic residues). Serine 521 carries the phosphoserine modification.

The protein resides in the nucleus. Transposase that mediates sequence-specific genomic rearrangements. Can induce genomic rearrangements that inactivate the HPRT1 gene. The sequence is that of PiggyBac transposable element-derived protein 5 (PGBD5) from Homo sapiens (Human).